Reading from the N-terminus, the 83-residue chain is Apolipoprotein C-I (83 aa).

A signal peptide spans 1 to 26 (MRLILSLPVLAVVLAMVLEGPAPAQA).

Belongs to the apolipoprotein C1 family.

It localises to the secreted. Functionally, inhibitor of lipoprotein binding to the low density lipoprotein (LDL) receptor, LDL receptor-related protein, and very low density lipoprotein (VLDL) receptor. Associates with high density lipoproteins (HDL) and the triacylglycerol-rich lipoproteins in the plasma and makes up about 10% of the protein of the VLDL and 2% of that of HDL. Appears to interfere directly with fatty acid uptake and is also the major plasma inhibitor of cholesteryl ester transfer protein (CETP). Binds free fatty acids and reduces their intracellular esterification. Modulates the interaction of APOE with beta-migrating VLDL and inhibits binding of beta-VLDL to the LDL receptor-related protein. The polypeptide is Apolipoprotein C-I (APOC1) (Eonycteris spelaea (Lesser dawn bat)).